Here is a 290-residue protein sequence, read N- to C-terminus: Nucleoid occlusion protein (290 aa).

The segment at residues 153-172 (EALAQRLGKGQSTIANKLRL) is a DNA-binding region (H-T-H motif).

The protein belongs to the ParB family.

The protein localises to the cytoplasm. The protein resides in the nucleoid. In terms of biological role, effects nucleoid occlusion by binding relatively nonspecifically to DNA and preventing the assembly of the division machinery in the vicinity of the nucleoid, especially under conditions that disturb the cell cycle. It helps to coordinate cell division and chromosome segregation by preventing the formation of the Z ring through the nucleoid, which would cause chromosome breakage. The polypeptide is Nucleoid occlusion protein (Bacillus cytotoxicus (strain DSM 22905 / CIP 110041 / 391-98 / NVH 391-98)).